The primary structure comprises 728 residues: MIVDKLLDDSRGGEGLLDAAGDCGLMTSPLNLAYFYGASPPSAPGAGDTGYLSAVPSAPGSPGSDSSDFSSTSSVSSCGAVESRPRGGARAERPQVEPHMGVGRQQRGPFQGVRVKNSVKELLLHIRSNKQKASGQPVDEFKTQSVNIEQLTDLKSAVSAVGKRKGPDPLSDGPVCKRPALLPSHFVTSPQTPTPGESMEDVRHSESKLDSSAALLQNIINIKNECNPVSLNTVQVSWMSPTVPQNSPRDQCQDFHGGQAFSPPQKYQPFQVSGSPQMMDQASMYQYSPQTQNMQQPPPLPPQQQHQQNYPHNSPLQFSPYSRMSQSPKYDSNLFDTHEPQFCTGQSFVSLLTGPGEPESLAVPVPAPTSIPPQTETQLQTFSLMPSNACEAVVGVHDVGSHSLGTSLSLQNIMGSPMNTTQLGKSFFQWQVEQEESKLANIPQDQFLARDGDGDTFLHIAVAQGRRALSYVLARKMNALHMLDIKEHNGQSAFQVAVAANQHLIVQDLVNLGAQVNTTDCWGRTPLHVCAEKGHSQVLQAIQKGAVRSNQFVDLEATNYDGLTPLHCAVVAHNAVVHELQRNRQSHSPEVQDLLLRNKSLVDTIKCLIQMGAAVEAKDRKSGRTALHLAAEEANLELIRLFLELPSCLSFVNAKAYNGNTALHVAASLQYRVTQLDAVRLLMRKGADPSTRNLENEQPVHLVPDGPVGEQIRRILKGKSIQQRAPPY.

Residues G45–R107 are disordered. The span at S53 to E82 shows a compositional bias: low complexity. The segment covering S83–V96 has biased composition (basic and acidic residues). The OCA domain occupies R107–N129. A Nuclear localization signal motif is present at residues K163–R178. Polar residues-rich tracts occupy residues P241–D250 and Q268–S288. The segment at P241–L334 is disordered. Residues Q303–P315 show a composition bias toward low complexity. Residues L316–Y330 show a composition bias toward polar residues. A required for transcriptional activity region spans residues K329 to S403. The segment at M414 to Y728 is interaction with NFKB1/p50. ANK repeat units lie at residues D453–M482, N489–T518, W522–Q551, D561–P589, V591–A617, S622–F651, and N658–T691.

Interacts with NFKB1/p50. Interacts with RELA. Interacts with AKIRIN2. As to expression, expressed in kidney, liver, lung and heart. Expressed at very low levels in skeletal muscle, spleen and brain.

It is found in the nucleus. Involved in regulation of NF-kappa-B transcription factor complexes. Inhibits NF-kappa-B activity without affecting its nuclear translocation upon stimulation. Inhibits DNA-binding of RELA and NFKB1/p50, and of the NF-kappa-B p65-p50 heterodimer and the NF-kappa-B p50-p50 homodimer. Also seems to activate NF-kappa-B-mediated transcription. In vitro, upon association with NFKB1/p50 has transcriptional activation activity and, together with NFKB1/p50 and RELA, is recruited to LCN2 promoters. Promotes transcription of LCN2 and DEFB4. Is recruited to IL-6 promoters and activates IL-6 but decreases TNF-alpha production in response to LPS. Seems to be involved in the induction of inflammatory genes activated through TLR/IL-1 receptor signaling. Involved in the induction of T helper 17 cells (Th17) differentiation upon recognition of antigen by T cell antigen receptor (TCR). This is NF-kappa-B inhibitor zeta (Nfkbiz) from Mus musculus (Mouse).